The following is a 200-amino-acid chain: MKSTEQHYSIKEAMLFSQRIAQLSKALWKSIEKDWQQWIKPFNLNINEHHILWIAYHFKGASISEIAKFGVMHVSTAFNFSKKLEEKGLLSFSKKQDDKRNTYIELTEKGEEVLMKLMETYDPTRNAVFNGALPLRELYGKFPEILEMMCIVRNIYGDDFMEIFERAFENIKEDFVEQDGKLVKRAPKAEEHEKELASPG.

An HTH marR-type domain is found at 13–157; that stretch reads AMLFSQRIAQ…MMCIVRNIYG (145 aa). The H-T-H motif DNA-binding region spans 63–86; the sequence is ISEIAKFGVMHVSTAFNFSKKLEE.

Homodimer.

Negative regulator of protease production and sporulation. In Geobacillus thermodenitrificans (strain NG80-2), this protein is HTH-type transcriptional regulator Hpr.